Consider the following 296-residue polypeptide: tRNA dimethylallyltransferase (296 aa).

Residue 11-18 (GPTAVGKT) coordinates ATP. 13-18 (TAVGKT) provides a ligand contact to substrate. An interaction with substrate tRNA region spans residues 36–39 (DSQQ).

Belongs to the IPP transferase family. In terms of assembly, monomer. Mg(2+) serves as cofactor.

The catalysed reaction is adenosine(37) in tRNA + dimethylallyl diphosphate = N(6)-dimethylallyladenosine(37) in tRNA + diphosphate. Catalyzes the transfer of a dimethylallyl group onto the adenine at position 37 in tRNAs that read codons beginning with uridine, leading to the formation of N6-(dimethylallyl)adenosine (i(6)A). The polypeptide is tRNA dimethylallyltransferase (Streptococcus equi subsp. zooepidemicus (strain H70)).